The primary structure comprises 610 residues: Lipoprotein LpqB (610 aa).

Residues 1 to 27 (MGAEGGGRRRALRLGAYVGCGAVLLTG) form the signal peptide. C28 is lipidated: N-palmitoyl cysteine. C28 is lipidated: S-diacylglycerol cysteine.

This sequence belongs to the LpqB lipoprotein family.

The protein localises to the cell membrane. The polypeptide is Lipoprotein LpqB (Streptomyces avermitilis (strain ATCC 31267 / DSM 46492 / JCM 5070 / NBRC 14893 / NCIMB 12804 / NRRL 8165 / MA-4680)).